The chain runs to 233 residues: Histone H1-I (233 aa).

2 disordered regions span residues 1–55 (MSDS…HPPV) and 115–233 (TGAS…KKSK). Over residues 17–29 (KAATPAKSPAKSP) the composition is skewed to low complexity. The 75-residue stretch at 51 to 125 (THPPVSEMVV…GASGSFKMPP (75 aa)) folds into the H15 domain. Composition is skewed to basic and acidic residues over residues 128–137 (KKVDKPEAAP) and 144–155 (PKREIEKKEKKV). 3 stretches are compositionally biased toward basic residues: residues 172-186 (AAKKAVAKPAAKKAA), 199-213 (SPKKAAAKPKAKPTP), and 223-233 (AAAKKPAKKSK).

Belongs to the histone H1/H5 family.

It localises to the nucleus. The protein resides in the chromosome. In terms of biological role, histones H1 are necessary for the condensation of nucleosome chains into higher-order structures. In Glyptotendipes salinus (Midge), this protein is Histone H1-I.